Consider the following 408-residue polypeptide: Ribulose bisphosphate carboxylase/oxygenase activase, chloroplastic (408 aa).

The N-terminal 32 residues, 1-32 (MQVTMKSSAVSGQRVGGARVATRSVRRAQLQV), are a transit peptide targeting the chloroplast. Residue 138-145 (GGKGQGKT) participates in ATP binding.

Belongs to the RuBisCO activase family. As to quaternary structure, monomer.

It is found in the plastid. The protein localises to the chloroplast stroma. Activation of RuBisCO (ribulose-1,5-bisphosphate carboxylase/oxygenase; EC 4.1.1.39) involves the ATP-dependent carboxylation of the epsilon-amino group of lysine leading to a carbamate structure. In Chlamydomonas reinhardtii (Chlamydomonas smithii), this protein is Ribulose bisphosphate carboxylase/oxygenase activase, chloroplastic.